Consider the following 295-residue polypeptide: UDP-N-acetylenolpyruvoylglucosamine reductase (295 aa).

The 166-residue stretch at 23–188 (KVGGPADFLA…ISAKFALKPG (166 aa)) folds into the FAD-binding PCMH-type domain. The active site involves Arg167. The Proton donor role is filled by Ser217. Glu287 is an active-site residue.

It belongs to the MurB family. The cofactor is FAD.

It localises to the cytoplasm. It carries out the reaction UDP-N-acetyl-alpha-D-muramate + NADP(+) = UDP-N-acetyl-3-O-(1-carboxyvinyl)-alpha-D-glucosamine + NADPH + H(+). The protein operates within cell wall biogenesis; peptidoglycan biosynthesis. In terms of biological role, cell wall formation. The chain is UDP-N-acetylenolpyruvoylglucosamine reductase from Streptococcus pyogenes serotype M1.